The following is a 185-amino-acid chain: Shikimate kinase (185 aa).

21-26 (GVGKTT) is an ATP binding site. Threonine 25 is a Mg(2+) binding site. Residues aspartate 43, arginine 67, and glycine 90 each contribute to the substrate site. Position 129 (arginine 129) interacts with ATP. Arginine 147 serves as a coordination point for substrate.

Belongs to the shikimate kinase family. Monomer. The cofactor is Mg(2+).

It localises to the cytoplasm. The enzyme catalyses shikimate + ATP = 3-phosphoshikimate + ADP + H(+). It participates in metabolic intermediate biosynthesis; chorismate biosynthesis; chorismate from D-erythrose 4-phosphate and phosphoenolpyruvate: step 5/7. Its function is as follows. Catalyzes the specific phosphorylation of the 3-hydroxyl group of shikimic acid using ATP as a cosubstrate. This Bacillus pumilus (strain SAFR-032) protein is Shikimate kinase.